A 368-amino-acid chain; its full sequence is MRPEQTARLEELSATLTSIEKVMDPEAVSERVRELEAQAGDPSLWDDPDHAQKVTSELSAQQAKLRKLNSLRGRIEDLPVMSELAEEEGDEASQELVETELKELGAAIESLEVTTMLSGEYDEREAVINIRSGAGGVDAADWAEMLMRMYTRWAEKNGHKVDVYDISYAEEAGIKSATFVVHGEYMYGQLSVEQGAHRLVRISPFDNQGRRQTSFAEVEVLPVVEQTDSIEVPDSEVRVDVYRSSGPGGQSVNTTDSAVRLTHIPTGIVVTCQNEKSQIQNKASAMRVLQAKLLERKRQEERAELDALGAGGNASWGNQMRSYVLHPYQMVKDLRTNYEVGDPSKVLDGDIDGFLESGIRWRMAQQEA.

The segment at 36 to 56 is disordered; the sequence is EAQAGDPSLWDDPDHAQKVTS. Position 250 is an N5-methylglutamine (glutamine 250).

This sequence belongs to the prokaryotic/mitochondrial release factor family. Post-translationally, methylated by PrmC. Methylation increases the termination efficiency of RF2.

Its subcellular location is the cytoplasm. Peptide chain release factor 2 directs the termination of translation in response to the peptide chain termination codons UGA and UAA. This Corynebacterium aurimucosum (strain ATCC 700975 / DSM 44827 / CIP 107346 / CN-1) (Corynebacterium nigricans) protein is Peptide chain release factor 2.